Here is a 640-residue protein sequence, read N- to C-terminus: 1-deoxy-D-xylulose-5-phosphate synthase (640 aa).

Residues His-79 and 120–122 (GHS) each bind thiamine diphosphate. Asp-151 contacts Mg(2+). Thiamine diphosphate contacts are provided by residues 152-153 (GA), Asn-180, Tyr-287, and Glu-369. Position 180 (Asn-180) interacts with Mg(2+).

It belongs to the transketolase family. DXPS subfamily. Homodimer. Requires Mg(2+) as cofactor. The cofactor is thiamine diphosphate.

It catalyses the reaction D-glyceraldehyde 3-phosphate + pyruvate + H(+) = 1-deoxy-D-xylulose 5-phosphate + CO2. It participates in metabolic intermediate biosynthesis; 1-deoxy-D-xylulose 5-phosphate biosynthesis; 1-deoxy-D-xylulose 5-phosphate from D-glyceraldehyde 3-phosphate and pyruvate: step 1/1. In terms of biological role, catalyzes the acyloin condensation reaction between C atoms 2 and 3 of pyruvate and glyceraldehyde 3-phosphate to yield 1-deoxy-D-xylulose-5-phosphate (DXP). The protein is 1-deoxy-D-xylulose-5-phosphate synthase of Thioalkalivibrio sulfidiphilus (strain HL-EbGR7).